The following is a 78-amino-acid chain: UPF0248 protein Msed_0897 (78 aa).

It belongs to the UPF0248 family.

The protein is UPF0248 protein Msed_0897 of Metallosphaera sedula (strain ATCC 51363 / DSM 5348 / JCM 9185 / NBRC 15509 / TH2).